Here is a 295-residue protein sequence, read N- to C-terminus: MGVKGLLFSIVLINLSLLGLCGYPRKPVDVPFWKNYEPSWASHHIKYLSGGSTVDLVLDRSSGAGFQSKKSYLFGHFSMKLKLVGGDSAGVVTAFYLSSNNAEHDEIDFEFLGNRTGQPYILQTNVFTGGKGDREQRIYLWFDPTKGYHSYSVLWNTFQIVIFVDDVPIRAFKNSKDLGVKFPFNQPMKIYSSLWDADDWATRGGLEKTDWSNAPFTASYTSFHVDGCEAATPQEVQVCNTKGMRWWDQKAFQDLDALQYRRLRWVRQKYTIYNYCTDRKRYPTLPPECTKDRDI.

An N-terminal signal peptide occupies residues 1 to 21 (MGVKGLLFSIVLINLSLLGLC). Positions 22 to 220 (GYPRKPVDVP…WSNAPFTASY (199 aa)) constitute a GH16 domain. Glu106 (nucleophile) is an active-site residue. Residue Glu110 is the Proton donor of the active site. Xyloglucan is bound at residue Glu110. N-linked (GlcNAc...) asparagine glycosylation occurs at Asn114. Xyloglucan is bound by residues 123–125 (QTN), 133–135 (DRE), 199–200 (DW), and Gly204. Disulfide bonds link Cys228–Cys239 and Cys276–Cys289. Arg281 contacts xyloglucan.

Belongs to the glycosyl hydrolase 16 family. XTH group 1 subfamily. Post-translationally, contains at least one intrachain disulfide bond essential for its enzymatic activity.

It is found in the secreted. The protein resides in the cell wall. It localises to the extracellular space. The protein localises to the apoplast. The catalysed reaction is breaks a beta-(1-&gt;4) bond in the backbone of a xyloglucan and transfers the xyloglucanyl segment on to O-4 of the non-reducing terminal glucose residue of an acceptor, which can be a xyloglucan or an oligosaccharide of xyloglucan.. Functionally, catalyzes xyloglucan endohydrolysis (XEH) and/or endotransglycosylation (XET). Cleaves and religates xyloglucan polymers, an essential constituent of the primary cell wall, and thereby participates in cell wall construction of growing tissues. The sequence is that of Probable xyloglucan endotransglucosylase/hydrolase protein (XTH) from Nicotiana tabacum (Common tobacco).